The sequence spans 111 residues: Toxin 3FTx-Tri2 (111 aa).

The signal sequence occupies residues 1-19 (MKTLLLALVVLAFVCLGSA). The propeptide occupies 20-34 (DQVGLGKEQIDRGRR). Q35 is modified (pyrrolidone carboxylic acid). Cystine bridges form between C44-C68, C47-C55, C61-C87, C91-C102, and C103-C108.

Belongs to the three-finger toxin family. Ancestral subfamily. Boigatoxin sub-subfamily. In terms of tissue distribution, expressed by the venom gland.

It is found in the secreted. Its function is as follows. Potent postsynaptic neurotoxin. Displays readily reversible competitive antagonism at the nicotinic acetylcholine receptor (nAChR). The sequence is that of Toxin 3FTx-Tri2 from Trimorphodon biscutatus (Western lyre snake).